We begin with the raw amino-acid sequence, 201 residues long: FMN-dependent NADH:quinone oxidoreductase (201 aa).

FMN is bound at residue 92–95; that stretch reads MWNL.

It belongs to the azoreductase type 1 family. In terms of assembly, homodimer. FMN serves as cofactor.

The catalysed reaction is 2 a quinone + NADH + H(+) = 2 a 1,4-benzosemiquinone + NAD(+). It catalyses the reaction N,N-dimethyl-1,4-phenylenediamine + anthranilate + 2 NAD(+) = 2-(4-dimethylaminophenyl)diazenylbenzoate + 2 NADH + 2 H(+). In terms of biological role, quinone reductase that provides resistance to thiol-specific stress caused by electrophilic quinones. Functionally, also exhibits azoreductase activity. Catalyzes the reductive cleavage of the azo bond in aromatic azo compounds to the corresponding amines. The protein is FMN-dependent NADH:quinone oxidoreductase of Caldicellulosiruptor saccharolyticus (strain ATCC 43494 / DSM 8903 / Tp8T 6331).